The following is a 432-amino-acid chain: D-amino acid dehydrogenase (432 aa).

Residue 3–17 (VVILGSGVVGVTSAW) participates in FAD binding.

Belongs to the DadA oxidoreductase family. The cofactor is FAD.

It catalyses the reaction a D-alpha-amino acid + A + H2O = a 2-oxocarboxylate + AH2 + NH4(+). It functions in the pathway amino-acid degradation; D-alanine degradation; NH(3) and pyruvate from D-alanine: step 1/1. In terms of biological role, oxidative deamination of D-amino acids. The chain is D-amino acid dehydrogenase from Salmonella arizonae (strain ATCC BAA-731 / CDC346-86 / RSK2980).